Reading from the N-terminus, the 398-residue chain is Acetate kinase (398 aa).

Asn-7 lines the Mg(2+) pocket. Position 14 (Lys-14) interacts with ATP. Substrate is bound at residue Arg-92. Asp-149 acts as the Proton donor/acceptor in catalysis. ATP is bound by residues 208 to 212 (HLGNG), 283 to 285 (DCR), and 331 to 335 (GIGEN). Glu-385 contributes to the Mg(2+) binding site.

The protein belongs to the acetokinase family. Homodimer. The cofactor is Mg(2+). Mn(2+) serves as cofactor.

Its subcellular location is the cytoplasm. The enzyme catalyses acetate + ATP = acetyl phosphate + ADP. Its pathway is metabolic intermediate biosynthesis; acetyl-CoA biosynthesis; acetyl-CoA from acetate: step 1/2. Its function is as follows. Catalyzes the formation of acetyl phosphate from acetate and ATP. Can also catalyze the reverse reaction. This is Acetate kinase from Fusobacterium nucleatum subsp. nucleatum (strain ATCC 25586 / DSM 15643 / BCRC 10681 / CIP 101130 / JCM 8532 / KCTC 2640 / LMG 13131 / VPI 4355).